We begin with the raw amino-acid sequence, 2289 residues long: Protein Ycf2 (2289 aa).

1643–1650 (GSIGTGRS) contacts ATP.

This sequence belongs to the Ycf2 family.

Its subcellular location is the plastid. It is found in the chloroplast stroma. Functionally, probable ATPase of unknown function. Its presence in a non-photosynthetic plant (Epifagus virginiana) and experiments in tobacco indicate that it has an essential function which is probably not related to photosynthesis. This is Protein Ycf2 from Aethionema grandiflorum (Persian stone-cress).